Reading from the N-terminus, the 128-residue chain is Translation initiation factor 5A (128 aa).

Lys-35 bears the Hypusine mark.

Belongs to the eIF-5A family.

It localises to the cytoplasm. Functionally, functions by promoting the formation of the first peptide bond. The chain is Translation initiation factor 5A (eif5a) from Methanosarcina mazei (strain ATCC BAA-159 / DSM 3647 / Goe1 / Go1 / JCM 11833 / OCM 88) (Methanosarcina frisia).